Consider the following 47-residue polypeptide: Photosystem II reaction center protein K (47 aa).

Residues 1–10 (MAVYTLDLLA) constitute a propeptide that is removed on maturation. The helical transmembrane segment at 19-39 (FGPLIDILPIIPLFFLLLAFV) threads the bilayer.

The protein belongs to the PsbK family. As to quaternary structure, PSII is composed of 1 copy each of membrane proteins PsbA, PsbB, PsbC, PsbD, PsbE, PsbF, PsbH, PsbI, PsbJ, PsbK, PsbL, PsbM, PsbT, PsbX, PsbY, PsbZ, Psb30/Ycf12, peripheral proteins PsbO, CyanoQ (PsbQ), PsbU, PsbV and a large number of cofactors. It forms dimeric complexes.

It is found in the cellular thylakoid membrane. Functionally, one of the components of the core complex of photosystem II (PSII). PSII is a light-driven water:plastoquinone oxidoreductase that uses light energy to abstract electrons from H(2)O, generating O(2) and a proton gradient subsequently used for ATP formation. It consists of a core antenna complex that captures photons, and an electron transfer chain that converts photonic excitation into a charge separation. The sequence is that of Photosystem II reaction center protein K from Synechococcus sp. (strain CC9311).